Consider the following 394-residue polypeptide: Elongation factor Tu (394 aa).

The tr-type G domain occupies 10–204 (LPHVNIGTIG…AVDEYIPTPT (195 aa)). The tract at residues 19-26 (GHVDHGKT) is G1. Residue 19–26 (GHVDHGKT) participates in GTP binding. Thr26 is a binding site for Mg(2+). The segment at 60–64 (GITIN) is G2. The G3 stretch occupies residues 81–84 (DCPG). GTP contacts are provided by residues 81 to 85 (DCPGH) and 136 to 139 (NKCD). The interval 136 to 139 (NKCD) is G4. Positions 174-176 (SAL) are G5.

It belongs to the TRAFAC class translation factor GTPase superfamily. Classic translation factor GTPase family. EF-Tu/EF-1A subfamily. As to quaternary structure, monomer.

It localises to the cytoplasm. It carries out the reaction GTP + H2O = GDP + phosphate + H(+). In terms of biological role, GTP hydrolase that promotes the GTP-dependent binding of aminoacyl-tRNA to the A-site of ribosomes during protein biosynthesis. The sequence is that of Elongation factor Tu from Mesoplasma florum (strain ATCC 33453 / NBRC 100688 / NCTC 11704 / L1) (Acholeplasma florum).